The sequence spans 349 residues: tRNA N6-adenosine threonylcarbamoyltransferase (349 aa).

The Fe cation site is built by histidine 116 and histidine 120. Substrate-binding positions include 139 to 143 (LVSGG), aspartate 172, glycine 185, and asparagine 283. Aspartate 311 is a Fe cation binding site.

It belongs to the KAE1 / TsaD family. Fe(2+) serves as cofactor.

It is found in the cytoplasm. The catalysed reaction is L-threonylcarbamoyladenylate + adenosine(37) in tRNA = N(6)-L-threonylcarbamoyladenosine(37) in tRNA + AMP + H(+). Required for the formation of a threonylcarbamoyl group on adenosine at position 37 (t(6)A37) in tRNAs that read codons beginning with adenine. Is involved in the transfer of the threonylcarbamoyl moiety of threonylcarbamoyl-AMP (TC-AMP) to the N6 group of A37, together with TsaE and TsaB. TsaD likely plays a direct catalytic role in this reaction. The chain is tRNA N6-adenosine threonylcarbamoyltransferase from Colwellia psychrerythraea (strain 34H / ATCC BAA-681) (Vibrio psychroerythus).